The following is a 529-amino-acid chain: Peptide chain release factor 3 (529 aa).

In terms of domain architecture, tr-type G spans A11–M280. GTP-binding positions include S20–T27, D88–H92, and N142–D145.

Belongs to the TRAFAC class translation factor GTPase superfamily. Classic translation factor GTPase family. PrfC subfamily.

The protein resides in the cytoplasm. Increases the formation of ribosomal termination complexes and stimulates activities of RF-1 and RF-2. It binds guanine nucleotides and has strong preference for UGA stop codons. It may interact directly with the ribosome. The stimulation of RF-1 and RF-2 is significantly reduced by GTP and GDP, but not by GMP. This chain is Peptide chain release factor 3, found in Yersinia pestis bv. Antiqua (strain Antiqua).